The following is a 293-amino-acid chain: Tyrosine recombinase XerD (293 aa).

One can recognise a Core-binding (CB) domain in the interval 1–83 (MHGLIADFIH…ALRKFYRFLL (83 aa)). The region spanning 104-287 (HLPATLSGTE…SNQHLVAVYH (184 aa)) is the Tyr recombinase domain. Residues Arg-144, Lys-168, His-239, Arg-242, and His-265 contribute to the active site. Tyr-274 acts as the O-(3'-phospho-DNA)-tyrosine intermediate in catalysis.

It belongs to the 'phage' integrase family. XerD subfamily. Forms a cyclic heterotetrameric complex composed of two molecules of XerC and two molecules of XerD.

The protein localises to the cytoplasm. Its function is as follows. Site-specific tyrosine recombinase, which acts by catalyzing the cutting and rejoining of the recombining DNA molecules. The XerC-XerD complex is essential to convert dimers of the bacterial chromosome into monomers to permit their segregation at cell division. It also contributes to the segregational stability of plasmids. The polypeptide is Tyrosine recombinase XerD (Lacticaseibacillus casei (Lactobacillus casei)).